The chain runs to 943 residues: Protein translocase subunit SecA (943 aa).

ATP is bound by residues Gln90, 108 to 112, and Asp509; that span reads GEGKT. Residues 535-560 are disordered; that stretch reads PNNEHKPPIPKQRSSKSKGGFSSKVG. A compositionally biased stretch (low complexity) spans 551–560; that stretch reads SKGGFSSKVG.

It belongs to the SecA family. In terms of assembly, monomer and homodimer. Part of the essential Sec protein translocation apparatus which comprises SecA, SecYEG and auxiliary proteins SecDF. Other proteins may also be involved.

The protein localises to the cell inner membrane. It is found in the cellular thylakoid membrane. Its subcellular location is the cytoplasm. It catalyses the reaction ATP + H2O + cellular proteinSide 1 = ADP + phosphate + cellular proteinSide 2.. Its function is as follows. Part of the Sec protein translocase complex. Interacts with the SecYEG preprotein conducting channel. Has a central role in coupling the hydrolysis of ATP to the transfer of proteins into and across the cell membrane, serving as an ATP-driven molecular motor driving the stepwise translocation of polypeptide chains across the membrane. In terms of biological role, probably participates in protein translocation into and across both the cytoplasmic and thylakoid membranes in cyanobacterial cells. The sequence is that of Protein translocase subunit SecA from Prochlorococcus marinus (strain MIT 9312).